The chain runs to 96 residues: Putative membrane protein insertion efficiency factor (96 aa).

It belongs to the UPF0161 family.

It localises to the cell inner membrane. Functionally, could be involved in insertion of integral membrane proteins into the membrane. The chain is Putative membrane protein insertion efficiency factor from Borreliella afzelii (strain PKo) (Borrelia afzelii).